The sequence spans 338 residues: Glycerol-3-phosphate dehydrogenase [NAD(P)+] (338 aa).

NADPH is bound by residues S13, W14, and K108. The sn-glycerol 3-phosphate site is built by K108, G139, and S141. A143 is an NADPH binding site. Residues K194, D247, S257, R258, and N259 each contribute to the sn-glycerol 3-phosphate site. The Proton acceptor role is filled by K194. R258 is an NADPH binding site. The NADPH site is built by V282 and E284.

Belongs to the NAD-dependent glycerol-3-phosphate dehydrogenase family.

The protein localises to the cytoplasm. It carries out the reaction sn-glycerol 3-phosphate + NAD(+) = dihydroxyacetone phosphate + NADH + H(+). The catalysed reaction is sn-glycerol 3-phosphate + NADP(+) = dihydroxyacetone phosphate + NADPH + H(+). It participates in membrane lipid metabolism; glycerophospholipid metabolism. Its function is as follows. Catalyzes the reduction of the glycolytic intermediate dihydroxyacetone phosphate (DHAP) to sn-glycerol 3-phosphate (G3P), the key precursor for phospholipid synthesis. The sequence is that of Glycerol-3-phosphate dehydrogenase [NAD(P)+] from Streptococcus uberis (strain ATCC BAA-854 / 0140J).